The following is a 728-amino-acid chain: Glutamate--cysteine ligase (728 aa).

The interval 517 to 552 (PVRTTRRGGSASRSASGTSTPNSGSSRPATPPLGPV) is disordered. A compositionally biased stretch (low complexity) spans 523-536 (RGGSASRSASGTST).

It belongs to the glutamate--cysteine ligase type 3 family.

It catalyses the reaction L-cysteine + L-glutamate + ATP = gamma-L-glutamyl-L-cysteine + ADP + phosphate + H(+). It participates in sulfur metabolism; glutathione biosynthesis; glutathione from L-cysteine and L-glutamate: step 1/2. The chain is Glutamate--cysteine ligase (gcs-1) from Neurospora crassa (strain ATCC 24698 / 74-OR23-1A / CBS 708.71 / DSM 1257 / FGSC 987).